A 510-amino-acid chain; its full sequence is O-acetyltransferase pyr7 (510 aa).

This sequence belongs to the fumigaclavine B O-acetyltransferase family.

The protein operates within secondary metabolite biosynthesis; terpenoid biosynthesis. Its function is as follows. O-acetyltransferase; part of the gene cluster that mediates the biosynthesis of pyripyropene A, a specific human acyl-coenzyme A:cholesterol acyltransferase 2 inhibitor. The first step of the pathway is the synthesis of nicotinyl-CoA from nicotinic acid by the nicotinic acid-CoA ligase pyr1. Nicotinyl-CoA is then a substrate of polyketide synthase pyr2 to produce 4-hydroxy-6-(3-pyridinyl)-2H-pyran-2-one (HPPO) which is further prenylated by the polyprenyl transferase pyr6 to yield farnesyl-HPPO. The next steps consist of an epoxidation of farnesyl-HPPO to epoxyfarnesyl-HPPO by FAD-dependent monooxygenase pyr5 and a cyclization of the terpenoid portion by the terpene cyclase pyr4 to yield deacetyl-pyripyropene E. The 2 cytochrome P450 monooxygenases pyr3 and pyr9, and the 2 acetyltransferases pyr7 and pyr8 are involved in the conversion of deacetyl-pyripyropene E into pyripyropene A through several cycles of oxidation and acetylation steps. Pyr7 acetylates deacetyl-pyripyropene E to pyripyropene E which is oxidized to 11-deacetyl-pyripyropene O by pyr3, which is in turn acetylated into pyripyropene O by pyr8. Pyripyropene O is then oxidized to deacetyl-pyripyropene A by pyr9. Deacetyl-pyripyropene A is finally acetylated to pyripyropene A by pyr8. This Aspergillus fumigatus (strain ATCC MYA-4609 / CBS 101355 / FGSC A1100 / Af293) (Neosartorya fumigata) protein is O-acetyltransferase pyr7.